The sequence spans 721 residues: Xylosyl- and glucuronyltransferase LARGE2 (721 aa).

The Cytoplasmic portion of the chain corresponds to 1 to 8 (MLPRGRPR). The chain crosses the membrane as a helical; Signal-anchor for type II membrane protein span at residues 9–29 (ALGAAALLLLLLLLGFLLFGG). At 30 to 721 (DLGCERREPG…LQQPQSPARG (692 aa)) the chain is on the lumenal side. Residues 59 to 89 (DGRLRRAAALDGDPGAGPGDHNRSDCGPQPP) form a disordered region. 2 N-linked (GlcNAc...) asparagine glycosylation sites follow: Asn-80 and Asn-107. Residues 97–372 (LHVAIVCAGH…FLEYDGNLLR (276 aa)) are xylosyltransferase activity. Mn(2+)-binding residues include Asp-201 and Asp-203. Asn-231 carries an N-linked (GlcNAc...) asparagine glycan. The interval 373–715 (RELFVCPSQP…LKYLPALQQP (343 aa)) is glucuronyltransferase activity. 2 residues coordinate Mn(2+): Asp-521 and Asp-523.

In the C-terminal section; belongs to the glycosyltransferase 49 family. This sequence in the N-terminal section; belongs to the glycosyltransferase 8 family. As to quaternary structure, interacts with B4GAT1. Mn(2+) is required as a cofactor. In terms of tissue distribution, widely expressed. Expressed at high level in placenta, pancreas and kidney compared to LARGE. Not expressed in brain.

It is found in the golgi apparatus membrane. It carries out the reaction 3-O-[beta-D-GlcA-(1-&gt;3)-beta-D-Xyl-(1-&gt;4)-Rib-ol-P-Rib-ol-P-3-beta-D-GalNAc-(1-&gt;3)-beta-D-GlcNAc-(1-&gt;4)-(O-6-P-alpha-D-Man)]-Thr-[protein] + UDP-alpha-D-xylose = 3-O-[alpha-D-Xyl-(1-&gt;3)-beta-D-GlcA-(1-&gt;4)-beta-D-Xyl-(1-&gt;4)-Rib-ol-P-Rib-ol-P-3-beta-D-GalNAc-(1-&gt;3)-beta-D-GlcNAc-(1-&gt;4)-(O-6-P-alpha-D-Man)]-Thr-[protein] + UDP + H(+). The catalysed reaction is 3-O-{(1-&gt;[3)-alpha-D-Xyl-(1-&gt;3)-beta-D-GlcA-(1-&gt;](n)-4)-beta-D-Xyl-(1-&gt;4)-Rib-ol-P-Rib-ol-P-3-beta-D-GalNAc-(1-&gt;3)-beta-D-GlcNAc-(1-&gt;4)-O-6-P-alpha-D-Man}-L-Thr-[protein] + UDP-alpha-D-glucuronate = 3-O-{beta-D-GlcA-(1-&gt;[3)-alpha-D-Xyl-(1-&gt;3)-beta-D-GlcA-(1-&gt;](n)-4)-beta-D-Xyl-(1-&gt;4)-Rib-ol-P-Rib-ol-P-3-beta-D-GalNAc-(1-&gt;3)-beta-D-GlcNAc-(1-&gt;4)-O-6-P-alpha-D-Man}-L-Thr-[protein] + UDP + H(+). The enzyme catalyses 3-O-{beta-D-GlcA-(1-&gt;[3)-alpha-D-Xyl-(1-&gt;3)-beta-D-GlcA-(1-&gt;](n)-4)-beta-D-Xyl-(1-&gt;4)-Rib-ol-P-Rib-ol-P-3-beta-D-GalNAc-(1-&gt;3)-beta-D-GlcNAc-(1-&gt;4)-O-6-P-alpha-D-Man}-L-Thr-[protein] + UDP-alpha-D-xylose = 3-O-{(1-&gt;[3)-alpha-D-Xyl-(1-&gt;3)-beta-D-GlcA-(1-&gt;](n+1)-4)-beta-D-Xyl-(1-&gt;4)-Rib-ol-P-Rib-ol-P-3-beta-D-GalNAc-(1-&gt;3)-beta-D-GlcNAc-(1-&gt;4)-O-6-P-alpha-D-Man}-L-Thr-[protein] + UDP + H(+). The protein operates within protein modification; protein glycosylation. In terms of biological role, bifunctional glycosyltransferase with both alpha-1,3-xylosyltransferase and beta-1,3-glucuronyltransferase activities involved in the maturation of alpha-dystroglycan (DAG1) by glycosylation leading to DAG1 binding to laminin G-like domain-containing extracellular proteins with high affinity and in a phosphorylated-O-mannosyl trisaccharide dependent manner. Elongates the glucuronyl-beta-1,4-xylose-beta disaccharide primer structure by adding repeating units [-3-Xylose-alpha-1,3-GlcA-beta-1-] to produce a heteropolysaccharide. Supports the maturation of DAG1 more effectively than LARGE1. In addition, can modify both heparan sulfate (HS)- and chondroitin/dermatan sulfate (CS/DS)-proteoglycans (PGs), namely GPC4, with a glycosaminoglycan (GAG)-like polysaccharide composed of xylose and glucuronic acid to confer laminin binding. The polypeptide is Xylosyl- and glucuronyltransferase LARGE2 (Homo sapiens (Human)).